A 221-amino-acid chain; its full sequence is Chalcone--flavanone isomerase (221 aa).

Positions 50, 115, and 192 each coordinate substrate.

The protein belongs to the chalcone isomerase family.

It carries out the reaction a chalcone = a flavanone.. It functions in the pathway secondary metabolite biosynthesis; flavonoid biosynthesis. Catalyzes the intramolecular cyclization of bicyclic chalcones into tricyclic (S)-flavanones. Responsible for the isomerization of 4,2',4',6'-tetrahydroxychalcone (also termed chalcone) into naringenin. The chain is Chalcone--flavanone isomerase (CHI) from Phaseolus vulgaris (Kidney bean).